The primary structure comprises 454 residues: Protein pid-2 (454 aa).

The disordered stretch occupies residues 31-61 (VQNNQKEHPPVQEIKTVSSKSKEHRVSSSRK). A compositionally biased stretch (basic and acidic residues) spans 50–61 (KSKEHRVSSSRK).

May interact with pid-4, pid-5, app-1 and prmt-5. In terms of tissue distribution, expressed throughout the mitotic and meiotic regions of the germline and in oocytes.

The protein localises to the cytoplasm. Its subcellular location is the perinuclear region. It localises to the cytoplasmic granule. In terms of biological role, involved in gene silencing mediated by a class of 21 nucleotide PIWI-interacting RNAs (piRNAs) that possess a uracil residue at the 5'-end (also called 21U-RNAs) and that guide the Piwi protein prg-1 to its DNA targets for silencing. Not required for the biogenesis of 21U-RNAs. May also be involved in gene silencing mediated by 22G-siRNAs (a class of 22 nucleotide endogenous small interfering RNAs (siRNAs) that possess a triphosphorylated guanine residue at the 5'-end) and 26G-siRNAs (a class of 26 nucleotide siRNAs that possess a guanine residue at the 5'-end). Required for the biogenesis of secondary and tertiary 22G-siRNAs from many loci. Specifically, promotes the production of 22G-siRNAs from the 5' end of target mRNAs. May play a role in the production of 26G-siRNAs. Plays a role in small RNA-directed transgenerational epigenetic inheritance (also called RNAe) over several generations and germline immortality. Together with the argonaut protein hrde-1, promotes the silencing of the DNA transposable element Tc1. Required for the formation of liquid-like condensates in the cytoplasm called Z granules, playing a role in maintaining their assembly, viscosity and morphology in adult germ cells, and localization in early embryos. The sequence is that of Protein pid-2 from Caenorhabditis elegans.